The chain runs to 364 residues: Protein FAM81A (364 aa).

Positions 80-107 (IRNITAIVKQLNRDIEVLQEQIRARDNI) form a coiled coil. Over residues 275–300 (ARLDKIEESQRRNAEGQRKPEEEKVH) the composition is skewed to basic and acidic residues. Residues 275–301 (ARLDKIEESQRRNAEGQRKPEEEKVHG) form a disordered region.

Belongs to the FAM81 family. As to quaternary structure, interacts with DLG4/PSD-95, GRIN2B/GLUN2B and SYNGAP1; the interactions facilitate condensate formation. Highly expressed in brain (at protein level).

Its subcellular location is the postsynaptic density. The protein resides in the cytoplasm. Functionally, facilitates the interaction and assembly of proteins within the postsynaptic density by promoting the condensation of postsynaptic proteins via liquid-liquid phase separation. Required for neuronal activity. Accumulation at the postsynaptic density results in enlargement of dendritic spines. This is Protein FAM81A from Rattus norvegicus (Rat).